The sequence spans 346 residues: UDP-N-acetylenolpyruvoylglucosamine reductase (346 aa).

One can recognise an FAD-binding PCMH-type domain in the interval 18–189 (LHAQARAFIA…VSVVFALKTH (172 aa)). Residue Arg165 is part of the active site. The Proton donor role is filled by Ser240. Residue Glu336 is part of the active site.

It belongs to the MurB family. It depends on FAD as a cofactor.

The protein localises to the cytoplasm. The catalysed reaction is UDP-N-acetyl-alpha-D-muramate + NADP(+) = UDP-N-acetyl-3-O-(1-carboxyvinyl)-alpha-D-glucosamine + NADPH + H(+). It participates in cell wall biogenesis; peptidoglycan biosynthesis. In terms of biological role, cell wall formation. This chain is UDP-N-acetylenolpyruvoylglucosamine reductase, found in Neisseria gonorrhoeae (strain ATCC 700825 / FA 1090).